The primary structure comprises 217 residues: Ribonuclease T (217 aa).

Residues 20–195 form the Exonuclease domain; sequence VVVDVETAGF…YDTEKTAELF (176 aa). Mg(2+) contacts are provided by aspartate 23, glutamate 25, histidine 182, and aspartate 187. The Proton donor/acceptor role is filled by histidine 182.

It belongs to the RNase T family. Homodimer. Mg(2+) serves as cofactor.

In terms of biological role, trims short 3' overhangs of a variety of RNA species, leaving a one or two nucleotide 3' overhang. Responsible for the end-turnover of tRNA: specifically removes the terminal AMP residue from uncharged tRNA (tRNA-C-C-A). Also appears to be involved in tRNA biosynthesis. The protein is Ribonuclease T of Vibrio vulnificus (strain YJ016).